The chain runs to 117 residues: Phosphoribosyl-ATP pyrophosphatase (117 aa).

The segment covering 96–105 has biased composition (basic and acidic residues); that stretch reads GVSGIEEKLS. The disordered stretch occupies residues 96 to 117; the sequence is GVSGIEEKLSRSQNQPEPTKAE. Polar residues predominate over residues 106–117; sequence RSQNQPEPTKAE.

Belongs to the PRA-PH family.

Its subcellular location is the cytoplasm. The enzyme catalyses 1-(5-phospho-beta-D-ribosyl)-ATP + H2O = 1-(5-phospho-beta-D-ribosyl)-5'-AMP + diphosphate + H(+). Its pathway is amino-acid biosynthesis; L-histidine biosynthesis; L-histidine from 5-phospho-alpha-D-ribose 1-diphosphate: step 2/9. The polypeptide is Phosphoribosyl-ATP pyrophosphatase (Nitrosomonas eutropha (strain DSM 101675 / C91 / Nm57)).